The chain runs to 276 residues: Small ribosomal subunit protein uS3 (276 aa).

Residues isoleucine 39 to lysine 110 enclose the KH type-2 domain.

It belongs to the universal ribosomal protein uS3 family. In terms of assembly, part of the 30S ribosomal subunit. Forms a tight complex with proteins S10 and S14.

In terms of biological role, binds the lower part of the 30S subunit head. Binds mRNA in the 70S ribosome, positioning it for translation. In Borrelia recurrentis (strain A1), this protein is Small ribosomal subunit protein uS3.